Here is a 77-residue protein sequence, read N- to C-terminus: Delta-conotoxin GmVIA (77 aa).

Residues 1–22 form the signal peptide; sequence MKLTCMMIVAVLFLTAWTFVTA. The propeptide occupies 23-48; that stretch reads DDSGNGMEILFPKAGHEMENLEVSNR. 3 disulfide bridges follow: Cys-52/Cys-67, Cys-59/Cys-72, and Cys-66/Cys-76.

This sequence belongs to the conotoxin O1 superfamily. Expressed by the venom duct.

The protein localises to the secreted. In terms of biological role, delta-conotoxins bind to site 6 of voltage-gated sodium channels (Nav) and inhibit the inactivation process. This toxin shows weak activity on rNav1.2/SCN2A (EC(50)=2.5 uM) and rNav1.4/SCN4A (EC(50)=4.8 uM). In vivo, injection of this peptide in the head region of garden snail induces retraction of the head and body into shell. This is followed by secretion of viscous green slime and a convulsive undulation into and out of the shell. No apparent biological activity was observed when a much greater dose of peptide was injected intraperitoneally into mice. This is Delta-conotoxin GmVIA from Conus gloriamaris (Glory-of-the-Sea cone).